An 89-amino-acid polypeptide reads, in one-letter code: Small ribosomal subunit protein uS19 (89 aa).

It belongs to the universal ribosomal protein uS19 family.

Protein S19 forms a complex with S13 that binds strongly to the 16S ribosomal RNA. In Bacteroides fragilis (strain YCH46), this protein is Small ribosomal subunit protein uS19.